A 256-amino-acid chain; its full sequence is MGVTAITVVTLMDGSGRIPAFVGEAHPDLWKVLTEWCYASLVQQRRAADEDTPRQHVVLRSSEIAPGSLALLPRATRPVVRTRSDPTAPFYITTETHELTRRPPADGSKPGEPLRISPPPRLDTEWSSVINGIQYLNSGARGTAPIHLWILGAADLCDQVLLAASRSTAAGAPGAPTGARLTRRRPGLTDADALDVIVAGIPATRAMFARVHNRSWRHAGEWTEALHAQIVTRGDVRRRRGGRGNGRERAPRCTIS.

3 disordered regions span residues 100-120 (TRRP…SPPP), 167-186 (STAA…RRRP), and 236-256 (VRRR…CTIS). Low complexity predominate over residues 167–180 (STAAGAPGAPTGAR). Over residues 245–256 (NGRERAPRCTIS) the composition is skewed to basic and acidic residues.

This sequence belongs to the herpesviridae US2 family.

This Sus scrofa (Pig) protein is Protein US2 homolog (28K).